The following is a 95-amino-acid chain: RING finger protein Z (95 aa).

Glycine 2 is lipidated: N-myristoyl glycine; by host. The RING-type; atypical zinc-finger motif lies at 38–74 (CKSCWFANKGLLKCSNHYLCLKCLTLMLRRSDYCGIC). Residues 88 to 91 (PSAP) carry the PTAP/PSAP motif motif.

The protein belongs to the arenaviridae Z protein family. In terms of assembly, interacts with protein NP; this interaction probably directs the encapsidated genome to budding sites. Interacts (via RING domain) with polymerase L; this interaction inhibits viral transcription and replication, Z partially blocks the product exit tunnel for the releasing nascent RNA product. Interacts with the glycoprotein complex; this interaction plays a role in virion budding. Interacts with host eIF4E; this interaction results in eIF4E reduced affinity for its substrate, the 5'-m7 G cap structure. Interacts (via late-budding domain) with host TSG101; this interaction is essential for budding and release of viral particles. Interacts with host RPLP0; this interaction may serve to load ribosome-like particles inside the virion. Interacts with host PML; this interaction induces PML bodies redistribution in the cytoplasm upon viral infection. Post-translationally, myristoylation is required for the role of RING finger protein Z in assembly and budding.

The protein localises to the virion. It localises to the host cytoplasm. Its subcellular location is the host perinuclear region. It is found in the host cell membrane. Functionally, plays a crucial role in virion assembly and budding. Expressed late in the virus life cycle, it acts as an inhibitor of viral transcription and RNA synthesis by interacting with the viral polymerase L. Presumably recruits the NP encapsidated genome to cellular membranes at budding sites via direct interaction with NP. Plays critical roles in the final steps of viral release by interacting with host TSG101, a member of the vacuolar protein-sorting pathway and using other cellular host proteins involved in vesicle formation pathway. The budding of the virus progeny occurs after association of protein Z with the viral glycoprotein complex SSP-GP1-GP2 at the cell periphery, step that requires myristoylation of protein Z. Also selectively represses protein production by associating with host eIF4E. In cell-based minigenome assay, has an inhibitory effect on the ribonucleoprotein machinery (vRNP), which is responsible for the replication and transcription of the viral genome. The protein is RING finger protein Z of Neotoma (wood rats).